A 297-amino-acid polypeptide reads, in one-letter code: Phosphatidylserine decarboxylase proenzyme (297 aa).

Residues aspartate 100, histidine 157, and serine 263 each act as charge relay system; for autoendoproteolytic cleavage activity in the active site. Serine 263 functions as the Schiff-base intermediate with substrate; via pyruvic acid; for decarboxylase activity in the catalytic mechanism. The residue at position 263 (serine 263) is a Pyruvic acid (Ser); by autocatalysis.

It belongs to the phosphatidylserine decarboxylase family. PSD-B subfamily. Prokaryotic type I sub-subfamily. Heterodimer of a large membrane-associated beta subunit and a small pyruvoyl-containing alpha subunit. Requires pyruvate as cofactor. In terms of processing, is synthesized initially as an inactive proenzyme. Formation of the active enzyme involves a self-maturation process in which the active site pyruvoyl group is generated from an internal serine residue via an autocatalytic post-translational modification. Two non-identical subunits are generated from the proenzyme in this reaction, and the pyruvate is formed at the N-terminus of the alpha chain, which is derived from the carboxyl end of the proenzyme. The autoendoproteolytic cleavage occurs by a canonical serine protease mechanism, in which the side chain hydroxyl group of the serine supplies its oxygen atom to form the C-terminus of the beta chain, while the remainder of the serine residue undergoes an oxidative deamination to produce ammonia and the pyruvoyl prosthetic group on the alpha chain. During this reaction, the Ser that is part of the protease active site of the proenzyme becomes the pyruvoyl prosthetic group, which constitutes an essential element of the active site of the mature decarboxylase.

The protein resides in the cell membrane. The catalysed reaction is a 1,2-diacyl-sn-glycero-3-phospho-L-serine + H(+) = a 1,2-diacyl-sn-glycero-3-phosphoethanolamine + CO2. The protein operates within phospholipid metabolism; phosphatidylethanolamine biosynthesis; phosphatidylethanolamine from CDP-diacylglycerol: step 2/2. In terms of biological role, catalyzes the formation of phosphatidylethanolamine (PtdEtn) from phosphatidylserine (PtdSer). The polypeptide is Phosphatidylserine decarboxylase proenzyme (Haemophilus ducreyi (strain 35000HP / ATCC 700724)).